A 74-amino-acid polypeptide reads, in one-letter code: Conotoxin MiEr93 (74 aa).

Positions Met1–Ala22 are cleaved as a signal peptide. Positions Ala23–Thr45 are excised as a propeptide. Intrachain disulfides connect Cys48-Cys62, Cys55-Cys66, and Cys61-Cys73.

The protein belongs to the conotoxin O1 superfamily. Expressed by the venom duct.

It is found in the secreted. This is Conotoxin MiEr93 from Conus miles (Soldier cone).